The sequence spans 314 residues: L-lactate dehydrogenase 2 (314 aa).

NAD(+) contacts are provided by residues Val-16, Asp-37, Lys-42, Tyr-68, and 82 to 83 (GL). Residues Gln-85, Arg-91, and 123 to 126 (NPVD) contribute to the substrate site. Residues 121-123 (ATN) and Ser-146 each bind NAD(+). A substrate-binding site is contributed by 151 to 154 (DSAR). Residues Arg-156 and His-171 each contribute to the beta-D-fructose 1,6-bisphosphate site. His-178 functions as the Proton acceptor in the catalytic mechanism. Tyr-223 is modified (phosphotyrosine). Thr-232 contacts substrate.

This sequence belongs to the LDH/MDH superfamily. LDH family. As to quaternary structure, homotetramer.

The protein resides in the cytoplasm. The catalysed reaction is (S)-lactate + NAD(+) = pyruvate + NADH + H(+). It participates in fermentation; pyruvate fermentation to lactate; (S)-lactate from pyruvate: step 1/1. Its activity is regulated as follows. Allosterically activated by fructose 1,6-bisphosphate (FBP). Its function is as follows. Catalyzes the conversion of lactate to pyruvate. This is L-lactate dehydrogenase 2 from Bacillus anthracis.